The sequence spans 207 residues: Peptidyl-tRNA hydrolase (207 aa).

Tyrosine 30 serves as a coordination point for tRNA. Residue histidine 35 is the Proton acceptor of the active site. TRNA-binding residues include tyrosine 81, asparagine 83, and asparagine 129.

The protein belongs to the PTH family. As to quaternary structure, monomer.

It is found in the cytoplasm. The enzyme catalyses an N-acyl-L-alpha-aminoacyl-tRNA + H2O = an N-acyl-L-amino acid + a tRNA + H(+). Functionally, hydrolyzes ribosome-free peptidyl-tRNAs (with 1 or more amino acids incorporated), which drop off the ribosome during protein synthesis, or as a result of ribosome stalling. Its function is as follows. Catalyzes the release of premature peptidyl moieties from peptidyl-tRNA molecules trapped in stalled 50S ribosomal subunits, and thus maintains levels of free tRNAs and 50S ribosomes. The chain is Peptidyl-tRNA hydrolase from Bordetella avium (strain 197N).